A 156-amino-acid polypeptide reads, in one-letter code: Ribosomal RNA large subunit methyltransferase H (156 aa).

Residues Leu-73, Gly-104, and 123–128 (VSSLTL) contribute to the S-adenosyl-L-methionine site.

This sequence belongs to the RNA methyltransferase RlmH family. As to quaternary structure, homodimer.

It is found in the cytoplasm. It catalyses the reaction pseudouridine(1915) in 23S rRNA + S-adenosyl-L-methionine = N(3)-methylpseudouridine(1915) in 23S rRNA + S-adenosyl-L-homocysteine + H(+). In terms of biological role, specifically methylates the pseudouridine at position 1915 (m3Psi1915) in 23S rRNA. This Paraburkholderia xenovorans (strain LB400) protein is Ribosomal RNA large subunit methyltransferase H.